A 77-amino-acid chain; its full sequence is Large ribosomal subunit protein bL28 (77 aa).

The tract at residues 1–21 (MARVCKVTGKRPMTGNNVSHA) is disordered.

This sequence belongs to the bacterial ribosomal protein bL28 family.

In Chromobacterium violaceum (strain ATCC 12472 / DSM 30191 / JCM 1249 / CCUG 213 / NBRC 12614 / NCIMB 9131 / NCTC 9757 / MK), this protein is Large ribosomal subunit protein bL28.